Here is a 281-residue protein sequence, read N- to C-terminus: Undecaprenyl-diphosphatase (281 aa).

7 helical membrane-spanning segments follow: residues serine 49–phenylalanine 69, leucine 92–isoleucine 112, leucine 116–alanine 136, methionine 152–phenylalanine 172, threonine 196–isoleucine 216, isoleucine 224–leucine 244, and phenylalanine 257–isoleucine 277.

Belongs to the UppP family.

It is found in the cell membrane. It catalyses the reaction di-trans,octa-cis-undecaprenyl diphosphate + H2O = di-trans,octa-cis-undecaprenyl phosphate + phosphate + H(+). Its function is as follows. Catalyzes the dephosphorylation of undecaprenyl diphosphate (UPP). Confers resistance to bacitracin. The protein is Undecaprenyl-diphosphatase of Macrococcus caseolyticus (strain JCSC5402) (Macrococcoides caseolyticum).